The sequence spans 207 residues: ATP-dependent Clp protease proteolytic subunit (207 aa).

Residue S111 is the Nucleophile of the active site. H136 is a catalytic residue.

The protein belongs to the peptidase S14 family. As to quaternary structure, fourteen ClpP subunits assemble into 2 heptameric rings which stack back to back to give a disk-like structure with a central cavity, resembling the structure of eukaryotic proteasomes. Component of the ClpAP and ClpXP complexes.

It localises to the cytoplasm. It catalyses the reaction Hydrolysis of proteins to small peptides in the presence of ATP and magnesium. alpha-casein is the usual test substrate. In the absence of ATP, only oligopeptides shorter than five residues are hydrolyzed (such as succinyl-Leu-Tyr-|-NHMec, and Leu-Tyr-Leu-|-Tyr-Trp, in which cleavage of the -Tyr-|-Leu- and -Tyr-|-Trp bonds also occurs).. Its function is as follows. Cleaves peptides in various proteins in a process that requires ATP hydrolysis. Has a chymotrypsin-like activity. Plays a major role in the degradation of misfolded proteins. This chain is ATP-dependent Clp protease proteolytic subunit, found in Escherichia coli O139:H28 (strain E24377A / ETEC).